The sequence spans 87 residues: MVNMKASMFLTFAGLVLLFVVCYASESEEKEFPKEMLSSIFAVDNDSKQEERDCVGYMRECKEKLCCSGYVCSSRWKWCVLPAPWRR.

The signal sequence occupies residues 1-24; the sequence is MVNMKASMFLTFAGLVLLFVVCYA. A propeptide spanning residues 25–52 is cleaved from the precursor; it reads SESEEKEFPKEMLSSIFAVDNDSKQEER. 3 disulfide bridges follow: C54-C67, C61-C72, and C66-C79.

This sequence belongs to the neurotoxin 10 (Hwtx-1) family. 51 (Hntx-8) subfamily. Hntx-8 sub-subfamily. As to expression, expressed by the venom gland.

It localises to the secreted. Functionally, ion channel inhibitor. In Cyriopagopus hainanus (Chinese bird spider), this protein is U3-theraphotoxin-Hhn1h.